The primary structure comprises 1050 residues: RecBCD enzyme subunit RecB (1050 aa).

The UvrD-like helicase ATP-binding domain occupies 1 to 443; it reads MKPFNIFDSN…LQLVNNYRST (443 aa). The interval 1–766 is DNA-binding and helicase activity, interacts with RecC; sequence MKPFNIFDSN…TNYVKLEGTQ (766 aa). 21–28 provides a ligand contact to ATP; that stretch reads ASAGTGKT. In terms of domain architecture, UvrD-like helicase C-terminal spans 458–701; it reads SPFLEIPGYL…KITTIHSSKG (244 aa). Residues 814-1050 are nuclease activity, interacts with RecD and RecA; it reads PKTIFSFSST…KAIQKCQAYH (237 aa). Mg(2+) contacts are provided by His859, Asp945, and Asp958. Asp958 functions as the For nuclease activity in the catalytic mechanism.

The protein belongs to the helicase family. UvrD subfamily. Heterotrimer of RecB, RecC and RecD. All subunits contribute to DNA-binding. Interacts with RecA. It depends on Mg(2+) as a cofactor.

The catalysed reaction is Exonucleolytic cleavage (in the presence of ATP) in either 5'- to 3'- or 3'- to 5'-direction to yield 5'-phosphooligonucleotides.. It catalyses the reaction Couples ATP hydrolysis with the unwinding of duplex DNA by translocating in the 3'-5' direction.. The enzyme catalyses ATP + H2O = ADP + phosphate + H(+). Functionally, a helicase/nuclease that prepares dsDNA breaks (DSB) for recombinational DNA repair. Binds to DSBs and unwinds DNA via a highly rapid and processive ATP-dependent bidirectional helicase activity. Unwinds dsDNA until it encounters a Chi (crossover hotspot instigator) sequence from the 3' direction. Cuts ssDNA a few nucleotides 3' to the Chi site. The properties and activities of the enzyme are changed at Chi. The Chi-altered holoenzyme produces a long 3'-ssDNA overhang and facilitates RecA-binding to the ssDNA for homologous DNA recombination and repair. Holoenzyme degrades any linearized DNA that is unable to undergo homologous recombination. In the holoenzyme this subunit contributes ATPase, 3'-5' helicase, exonuclease activity and loads RecA onto ssDNA. This chain is RecBCD enzyme subunit RecB, found in Chlamydia pneumoniae (Chlamydophila pneumoniae).